The primary structure comprises 291 residues: Lipoyl synthase (291 aa).

Positions 35, 40, 46, 61, 65, 68, and 273 each coordinate [4Fe-4S] cluster. The Radical SAM core domain occupies 47 to 262 (FGKRQATFLI…KEKALAMGFE (216 aa)).

It belongs to the radical SAM superfamily. Lipoyl synthase family. Requires [4Fe-4S] cluster as cofactor.

The protein resides in the cytoplasm. The catalysed reaction is [[Fe-S] cluster scaffold protein carrying a second [4Fe-4S](2+) cluster] + N(6)-octanoyl-L-lysyl-[protein] + 2 oxidized [2Fe-2S]-[ferredoxin] + 2 S-adenosyl-L-methionine + 4 H(+) = [[Fe-S] cluster scaffold protein] + N(6)-[(R)-dihydrolipoyl]-L-lysyl-[protein] + 4 Fe(3+) + 2 hydrogen sulfide + 2 5'-deoxyadenosine + 2 L-methionine + 2 reduced [2Fe-2S]-[ferredoxin]. The protein operates within protein modification; protein lipoylation via endogenous pathway; protein N(6)-(lipoyl)lysine from octanoyl-[acyl-carrier-protein]: step 2/2. In terms of biological role, catalyzes the radical-mediated insertion of two sulfur atoms into the C-6 and C-8 positions of the octanoyl moiety bound to the lipoyl domains of lipoate-dependent enzymes, thereby converting the octanoylated domains into lipoylated derivatives. This chain is Lipoyl synthase, found in Geobacter sp. (strain M21).